We begin with the raw amino-acid sequence, 223 residues long: tRNA (guanine-N(7)-)-methyltransferase (223 aa).

S-adenosyl-L-methionine is bound by residues Asp56, Asp81, Asp108, and Asp130. Asp130 is a catalytic residue. 2 residues coordinate substrate: Lys134 and Asp166.

Belongs to the class I-like SAM-binding methyltransferase superfamily. TrmB family.

It carries out the reaction guanosine(46) in tRNA + S-adenosyl-L-methionine = N(7)-methylguanosine(46) in tRNA + S-adenosyl-L-homocysteine. The protein operates within tRNA modification; N(7)-methylguanine-tRNA biosynthesis. In terms of biological role, catalyzes the formation of N(7)-methylguanine at position 46 (m7G46) in tRNA. This is tRNA (guanine-N(7)-)-methyltransferase from Rubrobacter xylanophilus (strain DSM 9941 / JCM 11954 / NBRC 16129 / PRD-1).